A 571-amino-acid polypeptide reads, in one-letter code: Chaperonin GroEL 1 (571 aa).

Residues 29–32 (TLGP), Lys-50, 86–90 (DGTTT), Gly-416, and Asp-498 contribute to the ATP site.

It belongs to the chaperonin (HSP60) family. As to quaternary structure, forms a cylinder of 14 subunits composed of two heptameric rings stacked back-to-back. Interacts with the co-chaperonin GroES.

The protein localises to the cytoplasm. The enzyme catalyses ATP + H2O + a folded polypeptide = ADP + phosphate + an unfolded polypeptide.. Together with its co-chaperonin GroES, plays an essential role in assisting protein folding. The GroEL-GroES system forms a nano-cage that allows encapsulation of the non-native substrate proteins and provides a physical environment optimized to promote and accelerate protein folding. This is Chaperonin GroEL 1 from Rhodopirellula baltica (strain DSM 10527 / NCIMB 13988 / SH1).